The primary structure comprises 1448 residues: DNA-directed RNA polymerase subunit beta' (1448 aa).

Positions 66, 68, 81, and 84 each coordinate Zn(2+). Residues Asp-474, Asp-476, and Asp-478 each coordinate Mg(2+). 4 residues coordinate Zn(2+): Cys-814, Cys-888, Cys-895, and Cys-898. The tract at residues 1408 to 1448 (LEELQAAIGGDGESPSGDGAAGDGAPSEEDVEQIEASGSEN) is disordered.

This sequence belongs to the RNA polymerase beta' chain family. The RNAP catalytic core consists of 2 alpha, 1 beta, 1 beta' and 1 omega subunit. When a sigma factor is associated with the core the holoenzyme is formed, which can initiate transcription. Mg(2+) is required as a cofactor. The cofactor is Zn(2+).

The catalysed reaction is RNA(n) + a ribonucleoside 5'-triphosphate = RNA(n+1) + diphosphate. Its function is as follows. DNA-dependent RNA polymerase catalyzes the transcription of DNA into RNA using the four ribonucleoside triphosphates as substrates. In Salinibacter ruber (strain DSM 13855 / M31), this protein is DNA-directed RNA polymerase subunit beta'.